The chain runs to 721 residues: Vacuolar transporter chaperone complex subunit 4 (721 aa).

The 148-residue stretch at 1 to 148 (MKFGEHLSKS…GFILKPVFQV (148 aa)) folds into the SPX domain. Residues 1–630 (MKFGEHLSKS…PKVYFATERT (630 aa)) are Cytoplasmic-facing. A Glycyl lysine isopeptide (Lys-Gly) (interchain with G-Cter in ubiquitin) cross-link involves residue Lys75. Residues 126 to 133 (GFQKIIKK) form an important for inositol polyphosphate binding region. Residues Lys200, Arg264, Arg266, Lys281, Lys294, Tyr359, and Arg361 each contribute to the ATP site. Residue Glu426 coordinates Mn(2+). The active site involves Lys458. Residues 489 to 512 (PLPTNIEITRPGRSDNEDNDFDED) are disordered. Transmembrane regions (helical) follow at residues 631–651 (YLSW…LLTY) and 652–672 (GSPT…AVLI). Residues 673-699 (RTVMVYAKRVVNIRLKRAVDYEDKIGP) are Cytoplasmic-facing. The chain crosses the membrane as a helical span at residues 700-720 (GMVSVFLILSILFSFFCNLVA). Residue Lys721 is a topological domain, vacuolar.

This sequence belongs to the VTC4 family. In terms of assembly, the VTC core complex is an integral membrane heterooligomer composed of the catalytic subunit VTC4 and the accessory subunits VTC1, VTC2 and VTC3. The complex exists in 2 different sub-complexes: VTC1-VTC2-VCT4 and VCT1-VTC3-VTC4. The VCT1-VTC3-VTC4 subcomplex is mostly found on the vacuolar membrane. The VTC1-VTC2-VCT4 subcomplex is observed in the cell periphery, probably ER and nuclear envelope, but localizes to the vacuole under phosphate starvation. Each subunit contains 3 transmembrane helices. VTC1 is a small membrane protein without hydrophilic domain. VTC2, VTC3 and VTC4 are related and have 2 hydrophilic domains that face the cytosol, an N-terminal SPX domain and the central core domain. The central core in VTC4 is the catalytic domain, with the essential catalytic lysine replaced by isoleucine and leucine in VTC2 and VTC3, respectively. The core complex associates with the accessory subunit VTC5. The complex interacts with the v-SNARE NYV1 and with the V(0) subunit of V-ATPase VPH1. It depends on Mn(2+) as a cofactor.

It localises to the vacuole membrane. The protein resides in the cytoplasm. The protein localises to the cell cortex. It is found in the endoplasmic reticulum membrane. Its subcellular location is the cytoplasmic vesicle. It localises to the autophagosome membrane. It carries out the reaction [phosphate](n) + ATP = [phosphate](n+1) + ADP. Its activity is regulated as follows. Activity of the enzyme is Mn(2+)-dependent and enhanced in the presence of pyrophosphate (PPi). Its function is as follows. Catalytic subunit of the vacuolar transporter chaperone (VTC) complex. The VTC complex acts as a vacuolar polyphosphate polymerase that catalyzes the synthesis of inorganic polyphosphate (polyP) via transfer of phosphate from ATP to a growing polyP chain, releasing ADP. VTC exposes its catalytic domain VTC4 to the cytosol, where the growing polyP chain winds through a tunnel-shaped pocket, integrating cytoplasmic polymer synthesis with polyP membrane translocation. The VTC complex carries 9 vacuolar transmembrane domains, which are likely to constitute the translocation channel into the organelle lumen. PolyP synthesis is tightly coupled to its transport into the vacuole lumen, in order to avoid otherwise toxic intermediates in the cytosol, and it depends on the proton gradient across the membrane, formed by V-ATPase. The VTC complex also plays a role in vacuolar membrane fusion. Required for SEC18/NSF activity in SNARE priming, membrane binding of LMA1 and V(0) trans-complex formation. Binds inositol hexakisphosphate (Ins6P) and similar inositol polyphosphates, such as 5-diphospho-inositol pentakisphosphate (5-InsP7); these are important intracellular signaling molecules. Inositol polyphosphate binding promotes vacuolar polyphosphate synthesis. The VTC complex is required for microautophagy. It is a constituent of autophagic tubes and is required for scission of microautophagic vesicles from these tubes. The protein is Vacuolar transporter chaperone complex subunit 4 of Saccharomyces cerevisiae (strain ATCC 204508 / S288c) (Baker's yeast).